The primary structure comprises 142 residues: Large ribosomal subunit protein uL23 (142 aa).

Belongs to the universal ribosomal protein uL23 family.

The chain is Large ribosomal subunit protein uL23 (RPL25) from Kluyveromyces lactis (strain ATCC 8585 / CBS 2359 / DSM 70799 / NBRC 1267 / NRRL Y-1140 / WM37) (Yeast).